Here is a 273-residue protein sequence, read N- to C-terminus: Aquaporin NIP1-4 (273 aa).

A run of 2 helical transmembrane segments spans residues 59–79 (LLAEFLATFFLMFAGLGAITV) and 86–106 (VTFPGVAVAWGAAVMAMVYAV). An NPA 1 motif is present at residues 115 to 117 (NPA). 3 consecutive transmembrane segments (helical) span residues 133–155 (APAYALAQTAAATAASVVLRLMF), 174–194 (SLVIEFVITFYLMFVIMAVAT), and 198–218 (AVGHMAGVAVGGTIMLNVLFA). Residues 227 to 229 (NPA) carry the NPA 2 motif. Residues 245–265 (WVYILGPFAGAAAGAWAYSLI) form a helical membrane-spanning segment.

The protein belongs to the MIP/aquaporin (TC 1.A.8) family. NIP (TC 1.A.8.12) subfamily. In terms of tissue distribution, expressed in leaves.

Its subcellular location is the membrane. In terms of biological role, aquaporins facilitate the transport of water and small neutral solutes across cell membranes. This is Aquaporin NIP1-4 (NIP1-4) from Oryza sativa subsp. japonica (Rice).